Here is a 386-residue protein sequence, read N- to C-terminus: Succinate--CoA ligase [ADP-forming] subunit beta (386 aa).

The ATP-grasp domain occupies 9–244 (KELLRDYGVP…LNEEDEKEIE (236 aa)). ATP-binding positions include Lys46, 53–55 (GRG), Glu99, Cys102, and Glu107. The Mg(2+) site is built by Asn199 and Asp213. Substrate-binding positions include Asn264 and 321–323 (GIM).

It belongs to the succinate/malate CoA ligase beta subunit family. As to quaternary structure, heterotetramer of two alpha and two beta subunits. Mg(2+) serves as cofactor.

The catalysed reaction is succinate + ATP + CoA = succinyl-CoA + ADP + phosphate. It catalyses the reaction GTP + succinate + CoA = succinyl-CoA + GDP + phosphate. It functions in the pathway carbohydrate metabolism; tricarboxylic acid cycle; succinate from succinyl-CoA (ligase route): step 1/1. In terms of biological role, succinyl-CoA synthetase functions in the citric acid cycle (TCA), coupling the hydrolysis of succinyl-CoA to the synthesis of either ATP or GTP and thus represents the only step of substrate-level phosphorylation in the TCA. The beta subunit provides nucleotide specificity of the enzyme and binds the substrate succinate, while the binding sites for coenzyme A and phosphate are found in the alpha subunit. The protein is Succinate--CoA ligase [ADP-forming] subunit beta of Alkaliphilus oremlandii (strain OhILAs) (Clostridium oremlandii (strain OhILAs)).